The chain runs to 147 residues: Basic phospholipase A2 beta-bungarotoxin A4 chain (147 aa).

A signal peptide spans 1-19; it reads MNPAHLLVLSAVCVSLLGA. A propeptide spanning residues 20-27 is cleaved from the precursor; the sequence is ANIPPHPL. Cystine bridges form between Cys-54–Cys-146, Cys-56–Cys-72, Cys-71–Cys-127, Cys-78–Cys-120, Cys-88–Cys-113, and Cys-106–Cys-118. Residues Tyr-55, Gly-57, and Gly-59 each coordinate Ca(2+). The active site involves His-75. A Ca(2+)-binding site is contributed by Asp-76. Residue Asp-121 is part of the active site.

It belongs to the phospholipase A2 family. Group I subfamily. D49 sub-subfamily. As to quaternary structure, heterodimer; disulfide-linked. The A chain has phospholipase A2 activity and the B chain shows homology with the basic protease inhibitors. Requires Ca(2+) as cofactor. In terms of tissue distribution, expressed by the venom gland.

It localises to the secreted. It carries out the reaction a 1,2-diacyl-sn-glycero-3-phosphocholine + H2O = a 1-acyl-sn-glycero-3-phosphocholine + a fatty acid + H(+). In terms of biological role, snake venom phospholipase A2 (PLA2) that shows presynaptic neurotoxicity. The A chain has phospholipase activity. PLA2 catalyzes the calcium-dependent hydrolysis of the 2-acyl groups in 3-sn-phosphoglycerides. The polypeptide is Basic phospholipase A2 beta-bungarotoxin A4 chain (Bungarus candidus (Malayan krait)).